A 620-amino-acid polypeptide reads, in one-letter code: Probable potassium transport system protein Kup (620 aa).

12 consecutive transmembrane segments (helical) span residues 7–27 (LALA…LYAI), 44–64 (VFGV…LKYL), 98–118 (FFLI…GMIT), 135–155 (PAFH…LFLF), 166–186 (LFGP…LVEI), 201–221 (GIMF…AVFL), 245–265 (WAFL…ALLL), 278–298 (LVPS…TIIA), 335–355 (IYVP…VIGF), 361–381 (LAAA…ILFY), 394–414 (VLNV…GASA), and 417–437 (LFHG…VMMT).

The protein belongs to the HAK/KUP transporter (TC 2.A.72) family.

The protein localises to the cell inner membrane. It carries out the reaction K(+)(in) + H(+)(in) = K(+)(out) + H(+)(out). Transport of potassium into the cell. Likely operates as a K(+):H(+) symporter. This is Probable potassium transport system protein Kup from Chlorobium chlorochromatii (strain CaD3).